Reading from the N-terminus, the 57-residue chain is Potassium channel toxin alpha-KTx 17.2 (57 aa).

A signal peptide spans 1 to 26; the sequence is MKTIIVLLLLTIVAAAVVESSPKARR. Cystine bridges form between cysteine 30–cysteine 46, cysteine 36–cysteine 51, and cysteine 40–cysteine 53.

The protein belongs to the short scorpion toxin superfamily. Potassium channel inhibitor family. Alpha-KTx 17 subfamily. Expressed by the venom gland.

It is found in the secreted. In terms of biological role, inhibits voltage-gated potassium channels. In Lychas mucronatus (Chinese swimming scorpion), this protein is Potassium channel toxin alpha-KTx 17.2.